The chain runs to 298 residues: Mitochondrial distribution and morphology protein 12 (298 aa).

In terms of domain architecture, SMP-LTD spans 1 to 298 (MSIELDWTGL…VYPHFYTLYL (298 aa)). Positions 118–142 (SEHEESLSRWSDTESETGTCDSSSL) are disordered. The span at 133-142 (ETGTCDSSSL) shows a compositional bias: polar residues.

The protein belongs to the MDM12 family. As to quaternary structure, component of the ER-mitochondria encounter structure (ERMES) or MDM complex, composed of MMM1, MDM10, MDM12 and MDM34. An MMM1 homodimer associates with one molecule of MDM12 on each side in a pairwise head-to-tail manner, and the SMP-LTD domains of MMM1 and MDM12 generate a continuous hydrophobic tunnel for phospholipid trafficking.

The protein resides in the mitochondrion outer membrane. It localises to the endoplasmic reticulum membrane. Component of the ERMES/MDM complex, which serves as a molecular tether to connect the endoplasmic reticulum (ER) and mitochondria. Components of this complex are involved in the control of mitochondrial shape and protein biogenesis, and function in nonvesicular lipid trafficking between the ER and mitochondria. MDM12 is required for the interaction of the ER-resident membrane protein MMM1 and the outer mitochondrial membrane-resident beta-barrel protein MDM10. The MDM12-MMM1 subcomplex functions in the major beta-barrel assembly pathway that is responsible for biogenesis of all mitochondrial outer membrane beta-barrel proteins, and acts in a late step after the SAM complex. The MDM10-MDM12-MMM1 subcomplex further acts in the TOM40-specific pathway after the action of the MDM12-MMM1 complex. Essential for establishing and maintaining the structure of mitochondria and maintenance of mtDNA nucleoids. The polypeptide is Mitochondrial distribution and morphology protein 12 (Malassezia globosa (strain ATCC MYA-4612 / CBS 7966) (Dandruff-associated fungus)).